Here is a 424-residue protein sequence, read N- to C-terminus: Vasopressin V1a receptor (424 aa).

Residues 1–40 are disordered; the sequence is MSFPRGSQDRSVGNSSPWWPLTTEGSNGSQEAARLGEGDS. Over 1-52 the chain is Extracellular; it reads MSFPRGSQDRSVGNSSPWWPLTTEGSNGSQEAARLGEGDSPLGDVRNEELAK. A compositionally biased stretch (polar residues) spans 9 to 30; sequence DRSVGNSSPWWPLTTEGSNGSQ. N-linked (GlcNAc...) asparagine glycosylation is present at asparagine 27. The helical transmembrane segment at 53–76 threads the bilayer; the sequence is LEIAVLAVIFVVAVLGNSSVLLAL. At 77 to 88 the chain is on the cytoplasmic side; sequence HRTPRKTSRMHL. A helical transmembrane segment spans residues 89-110; that stretch reads FIRHLSLADLAVAFFQVLPQLC. Over 111–125 the chain is Extracellular; the sequence is WDITYRFRGPDWLCR. A disulfide bridge connects residues cysteine 124 and cysteine 205. Residues 126–147 traverse the membrane as a helical segment; it reads VVKHLQVFAMFASAYMLVVMTA. The Cytoplasmic segment spans residues 148-168; that stretch reads DRYIAVCHPLKTLQQPARRSR. The chain crosses the membrane as a helical span at residues 169-190; the sequence is LMIATSWVLSFILSTPQYFIFS. Residues 191–220 are Extracellular-facing; the sequence is VIEIEVNNGTKTQDCWATFIQPWGTRAYVT. A helical transmembrane segment spans residues 221–241; the sequence is WMTSGVFVAPVVVLGTCYGFI. At 242-299 the chain is on the cytoplasmic side; the sequence is CYHIWRNIRGKTASSRHSKGDKGSGEAVGPFHKGLLVTPCVSSVKSISRAKIRTVKMT. The chain crosses the membrane as a helical span at residues 300-319; it reads FVIVSAYILCWAPFFIVQMW. The Extracellular portion of the chain corresponds to 320–337; it reads SVWDENFIWTDSENPSIT. Residues 338–357 form a helical membrane-spanning segment; sequence ITALLASLNSCCNPWIYMFF. The Cytoplasmic portion of the chain corresponds to 358–424; sequence SGHLLQDCVQ…KSIRFIPVST (67 aa). Residues cysteine 371 and cysteine 372 are each lipidated (S-palmitoyl cysteine). Positions 383–416 are disordered; it reads DSDSMSRRQTSYSNNRSPTNSTGMWKDSPKSSKS. Polar residues predominate over residues 389–405; sequence RRQTSYSNNRSPTNSTG. Phosphoserine is present on serine 410.

It belongs to the G-protein coupled receptor 1 family. Vasopressin/oxytocin receptor subfamily. In terms of processing, palmitoylated on three cysteine residues, of which only two are identified. As to expression, localized within gonadotropes of the anterior pituitary of the brain. Broadly distributed throughout the cerebral cortex.

It localises to the cell membrane. The protein resides in the cytoplasmic vesicle membrane. Functionally, receptor for arginine vasopressin. The activity of this receptor is mediated by G proteins which activate a phosphatidyl-inositol-calcium second messenger system. Involved in social memory formation. This is Vasopressin V1a receptor (Avpr1a) from Rattus norvegicus (Rat).